Reading from the N-terminus, the 32-residue chain is Snaclec (32 aa).

As to quaternary structure, dimer; disulfide-linked. In terms of tissue distribution, expressed by the venom gland.

It is found in the secreted. In terms of biological role, interferes with one step of hemostasis (modulation of platelet aggregation, or coagulation cascade, for example). This Bothrops diporus (Chaco lancehead) protein is Snaclec.